Here is a 175-residue protein sequence, read N- to C-terminus: NADH-quinone oxidoreductase subunit I 2 (175 aa).

2 consecutive 4Fe-4S ferredoxin-type domains span residues 50–82 (HVLQRDENGLEKCVACFLCAAACPSNCIYIEAA) and 98–127 (KVYNIDYNRCIFCGYCVEACPTDAITHGHG). [4Fe-4S] cluster is bound by residues Cys-62, Cys-65, Cys-68, Cys-72, Cys-107, Cys-110, Cys-113, and Cys-117.

Belongs to the complex I 23 kDa subunit family. In terms of assembly, NDH-1 is composed of 14 different subunits. Subunits NuoA, H, J, K, L, M, N constitute the membrane sector of the complex. The cofactor is [4Fe-4S] cluster.

Its subcellular location is the cell inner membrane. It catalyses the reaction a quinone + NADH + 5 H(+)(in) = a quinol + NAD(+) + 4 H(+)(out). NDH-1 shuttles electrons from NADH, via FMN and iron-sulfur (Fe-S) centers, to quinones in the respiratory chain. The immediate electron acceptor for the enzyme in this species is believed to be ubiquinone. Couples the redox reaction to proton translocation (for every two electrons transferred, four hydrogen ions are translocated across the cytoplasmic membrane), and thus conserves the redox energy in a proton gradient. The protein is NADH-quinone oxidoreductase subunit I 2 of Koribacter versatilis (strain Ellin345).